A 403-amino-acid chain; its full sequence is Acetyl-CoA acetyltransferase 2 (403 aa).

Catalysis depends on cysteine 97, which acts as the Acyl-thioester intermediate. Lysine 237 provides a ligand contact to CoA. Position 254 (alanine 254) interacts with K(+). CoA is bound at residue serine 258. K(+) is bound at residue valine 355. Residues histidine 359 and cysteine 389 each act as proton acceptor in the active site.

It belongs to the thiolase-like superfamily. Thiolase family. In terms of tissue distribution, expressed in root tips, emerging leaves, young leaves, stems, and anthers at the microspore stage.

The protein localises to the cytoplasm. It is found in the peroxisome. The catalysed reaction is 2 acetyl-CoA = acetoacetyl-CoA + CoA. The protein operates within metabolic intermediate biosynthesis; (R)-mevalonate biosynthesis; (R)-mevalonate from acetyl-CoA: step 1/3. Its function is as follows. Catalyzes the condensation of two molecules of acetyl-CoA to produce acetoacetyl-CoA. Generates the bulk of the acetoacetyl-CoA precursor required for the cytosol-localized, mevalonate-derived isoprenoid biosynthesis. The generated isoprenoids are required for normal growth and development. Essential protein during embryogenesis. This chain is Acetyl-CoA acetyltransferase 2, found in Arabidopsis thaliana (Mouse-ear cress).